The chain runs to 352 residues: MSSQGKVPVGIVGASGYGGVQLVRLLVDHPHLELAYLGGEGSAGRPYTDLYPHLQGCVDLLVEPVDLEAIAARCAVVFLALPNGLAVDLAPTLLQRGCRVLDLSADYRFSELKTYTLWYGKERQDQAVAATAVYGLPELYRDRIAEAQLIGCPGCYPTASLLALSPLMKQGLIVPETAIIDAKSGTSGGGRQGKINLLLAEAEGSLGAYNVGHHRHTPEIEQICSDLAGHEVMVQFTPHLIPMPRGILATVYATLRDPGLEREDLLTIYRAFYRNSPWVKILPSGTYPQTKWACGTNLCYIGIEVDSRTGRVIVMSAIDNLLKGQSGQAVQCLNLMMGWEETLGLPQLAFYP.

C155 is an active-site residue.

This sequence belongs to the NAGSA dehydrogenase family. Type 1 subfamily.

Its subcellular location is the cytoplasm. The catalysed reaction is N-acetyl-L-glutamate 5-semialdehyde + phosphate + NADP(+) = N-acetyl-L-glutamyl 5-phosphate + NADPH + H(+). Its pathway is amino-acid biosynthesis; L-arginine biosynthesis; N(2)-acetyl-L-ornithine from L-glutamate: step 3/4. In terms of biological role, catalyzes the NADPH-dependent reduction of N-acetyl-5-glutamyl phosphate to yield N-acetyl-L-glutamate 5-semialdehyde. This chain is N-acetyl-gamma-glutamyl-phosphate reductase, found in Cyanothece sp. (strain PCC 7425 / ATCC 29141).